The following is a 302-amino-acid chain: HTH-type transcriptional regulator AlsR (302 aa).

In terms of domain architecture, HTH lysR-type spans 1 to 58 (MELRHLQYFIAVAEELHFGKAARRLNMTQPPLSQQIKQLEEEVGVTLLKRTKRFVELT). The H-T-H motif DNA-binding region spans 18–37 (FGKAARRLNMTQPPLSQQIK).

The protein belongs to the LysR transcriptional regulatory family.

In terms of biological role, regulates the expression of the alsSD operon for acetoin biosynthesis. In Bacillus subtilis (strain 168), this protein is HTH-type transcriptional regulator AlsR (alsR).